We begin with the raw amino-acid sequence, 151 residues long: Deoxyuridine 5'-triphosphate nucleotidohydrolase (151 aa).

Residues 70–72 (RSG), Asn-83, 87–89 (LID), and Met-97 each bind substrate.

This sequence belongs to the dUTPase family. As to quaternary structure, homotrimer. Mg(2+) serves as cofactor.

It catalyses the reaction dUTP + H2O = dUMP + diphosphate + H(+). Its pathway is pyrimidine metabolism; dUMP biosynthesis; dUMP from dCTP (dUTP route): step 2/2. This enzyme is involved in nucleotide metabolism: it produces dUMP, the immediate precursor of thymidine nucleotides and it decreases the intracellular concentration of dUTP so that uracil cannot be incorporated into DNA. In Escherichia fergusonii (strain ATCC 35469 / DSM 13698 / CCUG 18766 / IAM 14443 / JCM 21226 / LMG 7866 / NBRC 102419 / NCTC 12128 / CDC 0568-73), this protein is Deoxyuridine 5'-triphosphate nucleotidohydrolase.